We begin with the raw amino-acid sequence, 440 residues long: Xylose isomerase (440 aa).

Catalysis depends on residues His-100 and Asp-103. Residues Glu-231, Glu-267, His-270, Asp-295, Asp-306, Asp-308, and Asp-338 each contribute to the Mg(2+) site.

This sequence belongs to the xylose isomerase family. As to quaternary structure, homotetramer. The cofactor is Mg(2+).

The protein localises to the cytoplasm. The enzyme catalyses alpha-D-xylose = alpha-D-xylulofuranose. The sequence is that of Xylose isomerase from Burkholderia multivorans (strain ATCC 17616 / 249).